We begin with the raw amino-acid sequence, 219 residues long: Orotate phosphoribosyltransferase (219 aa).

A 5-phospho-alpha-D-ribose 1-diphosphate-binding site is contributed by K26. Residue 34–35 participates in orotate binding; the sequence is FF. 5-phospho-alpha-D-ribose 1-diphosphate is bound by residues 72-73, R98, K99, K102, H104, and 124-132; these read YK and DDVITAGTA. T128 and R156 together coordinate orotate.

This sequence belongs to the purine/pyrimidine phosphoribosyltransferase family. PyrE subfamily. Homodimer. It depends on Mg(2+) as a cofactor.

The enzyme catalyses orotidine 5'-phosphate + diphosphate = orotate + 5-phospho-alpha-D-ribose 1-diphosphate. The protein operates within pyrimidine metabolism; UMP biosynthesis via de novo pathway; UMP from orotate: step 1/2. Its function is as follows. Catalyzes the transfer of a ribosyl phosphate group from 5-phosphoribose 1-diphosphate to orotate, leading to the formation of orotidine monophosphate (OMP). The sequence is that of Orotate phosphoribosyltransferase from Xanthomonas euvesicatoria pv. vesicatoria (strain 85-10) (Xanthomonas campestris pv. vesicatoria).